A 305-amino-acid polypeptide reads, in one-letter code: GMP synthase [glutamine-hydrolyzing] subunit B (305 aa).

The 183-residue stretch at 2–184 (VNTERFIQQA…LGLPREIQHR (183 aa)) folds into the GMPS ATP-PPase domain. 29 to 35 (SGGVDSS) contributes to the ATP binding site.

As to quaternary structure, heterodimer composed of a glutamine amidotransferase subunit (A) and a GMP-binding subunit (B).

It catalyses the reaction XMP + L-glutamine + ATP + H2O = GMP + L-glutamate + AMP + diphosphate + 2 H(+). It functions in the pathway purine metabolism; GMP biosynthesis; GMP from XMP (L-Gln route): step 1/1. Functionally, catalyzes the synthesis of GMP from XMP. The protein is GMP synthase [glutamine-hydrolyzing] subunit B of Methanosphaerula palustris (strain ATCC BAA-1556 / DSM 19958 / E1-9c).